The chain runs to 384 residues: Histidinol-phosphate aminotransferase 1 (384 aa).

The residue at position 233 (lysine 233) is an N6-(pyridoxal phosphate)lysine.

It belongs to the class-II pyridoxal-phosphate-dependent aminotransferase family. Histidinol-phosphate aminotransferase subfamily. Homodimer. It depends on pyridoxal 5'-phosphate as a cofactor.

It carries out the reaction L-histidinol phosphate + 2-oxoglutarate = 3-(imidazol-4-yl)-2-oxopropyl phosphate + L-glutamate. It functions in the pathway amino-acid biosynthesis; L-histidine biosynthesis; L-histidine from 5-phospho-alpha-D-ribose 1-diphosphate: step 7/9. In Thiobacillus denitrificans (strain ATCC 25259 / T1), this protein is Histidinol-phosphate aminotransferase 1.